A 393-amino-acid polypeptide reads, in one-letter code: S-adenosylmethionine synthase 4 (393 aa).

Position 9 (Glu-9) interacts with Mg(2+). His-15 serves as a coordination point for ATP. Glu-43 is a K(+) binding site. The L-methionine site is built by Glu-56 and Gln-99. Residues 167 to 169 (DGK), 235 to 238 (SGRF), Asp-246, 252 to 253 (RK), Ala-269, Lys-273, and Lys-277 each bind ATP. Residue Asp-246 coordinates L-methionine. Lys-277 is a binding site for L-methionine.

Belongs to the AdoMet synthase family. Homotetramer. It depends on Mn(2+) as a cofactor. Mg(2+) serves as cofactor. Co(2+) is required as a cofactor. The cofactor is K(+). Detected in trichomes (at the protein level).

Its subcellular location is the cytoplasm. It catalyses the reaction L-methionine + ATP + H2O = S-adenosyl-L-methionine + phosphate + diphosphate. Its pathway is amino-acid biosynthesis; S-adenosyl-L-methionine biosynthesis; S-adenosyl-L-methionine from L-methionine: step 1/1. Catalyzes the formation of S-adenosylmethionine from methionine and ATP. The reaction comprises two steps that are both catalyzed by the same enzyme: formation of S-adenosylmethionine (AdoMet) and triphosphate, and subsequent hydrolysis of the triphosphate. In Arabidopsis thaliana (Mouse-ear cress), this protein is S-adenosylmethionine synthase 4 (METK4).